The following is a 37-amino-acid chain: Large ribosomal subunit protein bL36c (37 aa).

Belongs to the bacterial ribosomal protein bL36 family.

The protein resides in the plastid. It is found in the chloroplast. This Chloranthus spicatus (Chulantree) protein is Large ribosomal subunit protein bL36c.